Reading from the N-terminus, the 289-residue chain is 4-hydroxy-tetrahydrodipicolinate synthase (289 aa).

Position 45 (T45) interacts with pyruvate. Y133 functions as the Proton donor/acceptor in the catalytic mechanism. K161 acts as the Schiff-base intermediate with substrate in catalysis. Residue I200 coordinates pyruvate.

The protein belongs to the DapA family. In terms of assembly, homotetramer; dimer of dimers.

The protein localises to the cytoplasm. The enzyme catalyses L-aspartate 4-semialdehyde + pyruvate = (2S,4S)-4-hydroxy-2,3,4,5-tetrahydrodipicolinate + H2O + H(+). It functions in the pathway amino-acid biosynthesis; L-lysine biosynthesis via DAP pathway; (S)-tetrahydrodipicolinate from L-aspartate: step 3/4. Catalyzes the condensation of (S)-aspartate-beta-semialdehyde [(S)-ASA] and pyruvate to 4-hydroxy-tetrahydrodipicolinate (HTPA). The protein is 4-hydroxy-tetrahydrodipicolinate synthase of Coxiella burnetii (strain Dugway 5J108-111).